The primary structure comprises 365 residues: Alanine racemase (365 aa).

Lysine 35 (proton acceptor; specific for D-alanine) is an active-site residue. Lysine 35 bears the N6-(pyridoxal phosphate)lysine mark. Arginine 130 is a binding site for substrate. Tyrosine 256 serves as the catalytic Proton acceptor; specific for L-alanine. Methionine 304 is a substrate binding site.

The protein belongs to the alanine racemase family. Pyridoxal 5'-phosphate is required as a cofactor.

It catalyses the reaction L-alanine = D-alanine. Its pathway is amino-acid biosynthesis; D-alanine biosynthesis; D-alanine from L-alanine: step 1/1. Functionally, catalyzes the interconversion of L-alanine and D-alanine. May also act on other amino acids. The chain is Alanine racemase (alr) from Polaromonas naphthalenivorans (strain CJ2).